Reading from the N-terminus, the 440-residue chain is Ribulose bisphosphate carboxylase large chain (440 aa).

The residue at position 4 (Lys4) is an N6,N6,N6-trimethyllysine. Asn113 and Thr163 together coordinate substrate. The active-site Proton acceptor is Lys165. Substrate is bound at residue Lys167. Mg(2+) contacts are provided by Lys191, Asp193, and Glu194. Lys191 carries the post-translational modification N6-carboxylysine. His284 acts as the Proton acceptor in catalysis. Residues Arg285, His317, and Ser369 each coordinate substrate.

This sequence belongs to the RuBisCO large chain family. Type I subfamily. Heterohexadecamer of 8 large chains and 8 small chains; disulfide-linked. The disulfide link is formed within the large subunit homodimers. Mg(2+) serves as cofactor. Post-translationally, the disulfide bond which can form in the large chain dimeric partners within the hexadecamer appears to be associated with oxidative stress and protein turnover.

The protein resides in the plastid. It localises to the chloroplast. The enzyme catalyses 2 (2R)-3-phosphoglycerate + 2 H(+) = D-ribulose 1,5-bisphosphate + CO2 + H2O. It catalyses the reaction D-ribulose 1,5-bisphosphate + O2 = 2-phosphoglycolate + (2R)-3-phosphoglycerate + 2 H(+). Functionally, ruBisCO catalyzes two reactions: the carboxylation of D-ribulose 1,5-bisphosphate, the primary event in carbon dioxide fixation, as well as the oxidative fragmentation of the pentose substrate in the photorespiration process. Both reactions occur simultaneously and in competition at the same active site. This is Ribulose bisphosphate carboxylase large chain from Pteris vittata (Chinese ladder brake).